We begin with the raw amino-acid sequence, 237 residues long: Ribosomal RNA small subunit methyltransferase G (237 aa).

S-adenosyl-L-methionine is bound by residues Gly78, Phe83, 129 to 130, and Arg148; that span reads AE.

Belongs to the methyltransferase superfamily. RNA methyltransferase RsmG family.

It is found in the cytoplasm. Functionally, specifically methylates the N7 position of a guanine in 16S rRNA. This is Ribosomal RNA small subunit methyltransferase G from Streptococcus pyogenes serotype M12 (strain MGAS2096).